The chain runs to 339 residues: tRNA N6-adenosine threonylcarbamoyltransferase (339 aa).

The Fe cation site is built by His111 and His115. Substrate-binding positions include 139–143 (LVSGG), Asp172, Gly185, Asp189, and Asn280. Asp308 is a Fe cation binding site.

This sequence belongs to the KAE1 / TsaD family. Fe(2+) is required as a cofactor.

The protein localises to the cytoplasm. The catalysed reaction is L-threonylcarbamoyladenylate + adenosine(37) in tRNA = N(6)-L-threonylcarbamoyladenosine(37) in tRNA + AMP + H(+). Its function is as follows. Required for the formation of a threonylcarbamoyl group on adenosine at position 37 (t(6)A37) in tRNAs that read codons beginning with adenine. Is involved in the transfer of the threonylcarbamoyl moiety of threonylcarbamoyl-AMP (TC-AMP) to the N6 group of A37, together with TsaE and TsaB. TsaD likely plays a direct catalytic role in this reaction. The polypeptide is tRNA N6-adenosine threonylcarbamoyltransferase (Phocaeicola vulgatus (strain ATCC 8482 / DSM 1447 / JCM 5826 / CCUG 4940 / NBRC 14291 / NCTC 11154) (Bacteroides vulgatus)).